Consider the following 797-residue polypeptide: Interphotoreceptor matrix proteoglycan 1 (797 aa).

The signal sequence occupies residues 1-20; the sequence is MYLETRRAIFVFWIFLQVQG. N-linked (GlcNAc...) asparagine glycans are attached at residues Asn-42, Asn-143, Asn-191, and Asn-215. In terms of domain architecture, SEA 1 spans 232–354; sequence EEQRVELSVS…QPEIYLTATD (123 aa). O-linked (GalNAc...) threonine glycosylation is found at Thr-403, Thr-421, Thr-432, and Thr-442. Residues 571–684 form the SEA 2 domain; it reads RELVVFFSLR…YSLNIEPADQ (114 aa). N-linked (GlcNAc...) asparagine glycosylation is found at Asn-592 and Asn-616. A Heparin- and hyaluronan-binding motif is present at residues 621–629; that stretch reads KQLEILNFR. N-linked (GlcNAc...) asparagine glycans are attached at residues Asn-630 and Asn-648.

The N-terminus is blocked. In terms of processing, highly glycosylated (N- and O-linked carbohydrates and sialic acid). Expressed in the retina (at protein level). In the retina, specifically expressed by cone and rod photoreceptor cells. Localizes to cone and rod photoreceptor cells surrounding the interphotoreceptor matrix of the retina.

Its subcellular location is the cell projection. The protein resides in the cilium. It is found in the photoreceptor outer segment. The protein localises to the secreted. It localises to the extracellular space. Its subcellular location is the extracellular matrix. The protein resides in the interphotoreceptor matrix. It is found in the photoreceptor inner segment. In terms of biological role, chondroitin sulfate-, heparin- and hyaluronan-binding protein. May serve to form a basic macromolecular scaffold comprising the insoluble interphotoreceptor matrix. The chain is Interphotoreceptor matrix proteoglycan 1 from Homo sapiens (Human).